We begin with the raw amino-acid sequence, 106 residues long: PADSEHSAIFQCIQGLPEGALRRIILTASGGAFRDLPVEKLKEVKVADALKHPNWNMGKKITVDSATLFNKGLEVIEAHYLFGAEYDDIEIVIHPQSIIHSMVETQ.

Asp-3 is a Mn(2+) binding site. Positions 4, 5, 29, 52, 65, 70, 71, and 74 each coordinate 1-deoxy-D-xylulose 5-phosphate. Glu-5 is a binding site for Mn(2+). Glu-74 provides a ligand contact to Mn(2+).

It belongs to the DXR family. Requires Mn(2+) as cofactor. Mg(2+) serves as cofactor.

The protein resides in the plastid. Its subcellular location is the chloroplast stroma. The enzyme catalyses 2-C-methyl-D-erythritol 4-phosphate + NADP(+) = 1-deoxy-D-xylulose 5-phosphate + NADPH + H(+). It participates in isoprenoid biosynthesis; isopentenyl diphosphate biosynthesis via DXP pathway; isopentenyl diphosphate from 1-deoxy-D-xylulose 5-phosphate: step 1/6. Functionally, enzyme of the plastid non-mevalonate pathway for isoprenoid biosynthesis that catalyzes the NADPH-dependent rearrangement and reduction of 1-deoxy-D-xylulose-5-phosphate (DXP) to 2-C-methyl-D-erythritol 4-phosphate (MEP). Required for chloroplast development. This chain is 1-deoxy-D-xylulose 5-phosphate reductoisomerase, found in Origanum vulgare (Wild marjoram).